Here is a 124-residue protein sequence, read N- to C-terminus: Ragulator complex protein LAMTOR3 (124 aa).

The segment at 57 to 70 is required for interaction with LAMTOR2; that stretch reads TDQGSKLGLSKNKS.

This sequence belongs to the LAMTOR3 family. In terms of assembly, part of the Ragulator complex composed of LAMTOR1, LAMTOR2, LAMTOR3, LAMTOR4 and LAMTOR5. LAMTOR4 and LAMTOR5 form a heterodimer that interacts, through LAMTOR1, with a LAMTOR2, LAMTOR3 heterodimer. The Ragulator complex interacts with both the mTORC1 complex and heterodimers constituted of the Rag GTPases RagA/RRAGA, RagB/RRAGB, RagC/RRAGC and RagD/RRAGD; regulated by amino acid availability. The Ragulator complex interacts with SLC38A9; the probable amino acid sensor. Interacts with LAMTOR1 and LAMTOR2; the interaction is direct. Component of the lysosomal folliculin complex (LFC), composed of FLCN, FNIP1 (or FNIP2), RagA/RRAGA or RagB/RRAGB GDP-bound, RagC/RRAGC or RagD/RRAGD GTP-bound, and Ragulator. Interacts with MAP2K1/MEK1 and MAPK2. Interacts with MORG1.

The protein localises to the late endosome membrane. In terms of biological role, as part of the Ragulator complex it is involved in amino acid sensing and activation of mTORC1, a signaling complex promoting cell growth in response to growth factors, energy levels, and amino acids. Activated by amino acids through a mechanism involving the lysosomal V-ATPase, the Ragulator plays a dual role for the small GTPases Rag (RagA/RRAGA, RagB/RRAGB, RagC/RRAGC and/or RagD/RRAGD): it (1) acts as a guanine nucleotide exchange factor (GEF), activating the small GTPases Rag and (2) mediates recruitment of Rag GTPases to the lysosome membrane. Activated Ragulator and Rag GTPases function as a scaffold recruiting mTORC1 to lysosomes where it is in turn activated. Adapter protein that enhances the efficiency of the MAP kinase cascade facilitating the activation of MAPK2. The sequence is that of Ragulator complex protein LAMTOR3 (Lamtor3) from Mus musculus (Mouse).